A 959-amino-acid polypeptide reads, in one-letter code: Isoleucine--tRNA ligase (959 aa).

The short motif at 60-70 (PYANGSLHMGH) is the 'HIGH' region element. An L-isoleucyl-5'-AMP-binding site is contributed by Glu-569. The 'KMSKS' region motif lies at 610-614 (KMSKS). An ATP-binding site is contributed by Lys-613. Residues Cys-928, Cys-931, Cys-948, and Cys-951 each coordinate Zn(2+).

The protein belongs to the class-I aminoacyl-tRNA synthetase family. IleS type 1 subfamily. As to quaternary structure, monomer. Zn(2+) serves as cofactor.

Its subcellular location is the cytoplasm. The catalysed reaction is tRNA(Ile) + L-isoleucine + ATP = L-isoleucyl-tRNA(Ile) + AMP + diphosphate. Catalyzes the attachment of isoleucine to tRNA(Ile). As IleRS can inadvertently accommodate and process structurally similar amino acids such as valine, to avoid such errors it has two additional distinct tRNA(Ile)-dependent editing activities. One activity is designated as 'pretransfer' editing and involves the hydrolysis of activated Val-AMP. The other activity is designated 'posttransfer' editing and involves deacylation of mischarged Val-tRNA(Ile). This is Isoleucine--tRNA ligase from Crocosphaera subtropica (strain ATCC 51142 / BH68) (Cyanothece sp. (strain ATCC 51142)).